Here is a 261-residue protein sequence, read N- to C-terminus: Thioesterase AMT4 (261 aa).

The protein belongs to the AMT4 thioesterase family.

It participates in mycotoxin biosynthesis. Functionally, thioesterase; part of the gene clusters that mediate the biosynthesis of AM-toxins, host-selective toxins (HSTs) causing Alternaria blotch on apple, a worldwide distributed disease. AM-toxins are cyclic depsipeptides containing the 3 residues 2-hydroxy-isovaleric acid (2-HIV), dehydroalanine, L-alanine which are common for all 3 AM-toxins I to III. The fourth precursor is L-alpha-amino-methoxyphenyl-valeric acid (L-Amv) for AM-toxin I, L-alpha-amino-phenyl-valeric acid (L-Apv) for AM-toxin II, and L-alpha-amino-hydroxyphenyl-valeric acid (L-Ahv) for AM-toxin III. AM-toxins have two target sites for affecting susceptible apple cells; they cause invagination of the plasma membrane and electrolyte loss and chloroplast disorganization. The non-ribosomal peptide synthetase AMT1 contains 4 catalytic modules and is responsible for activation of each residue in AM-toxin. The aldo-keto reductase AMT2 catalyzes the conversion of 2-keto-isovaleric acid (2-KIV) to 2-hydroxy-isovaleric acid (2-HIV), one of the precursor residues incorporated by AMT1 during AM-toxin biosynthesis, by reduction of its ketone to an alcohol. The cytochrome P450 monooxygenase AMT3 and the thioesterase AMT4 are also important for AM-toxin production, but their exact function within the AM-toxin biosynthesis are not known yet. Up to 21 proteins (including AMT1 to AMT4) are predicted to be involved in AM-toxin biosynthesis since their expression ishighly up-regulated in AM-toxin-producing cultures. The polypeptide is Thioesterase AMT4 (Alternaria alternata (Alternaria rot fungus)).